Consider the following 534-residue polypeptide: MTDNRTSFRLEILNRLCKRERQQRCVKDMFKNYSLLDEQLQQSHRSRSVSVNDEHFKGNVNDRLAVMKEEMANVYRMKSKNDQDLIDANRKLADSESRYSLVSSQRDKLRIETDAIVKKMTVLENELAELKEENSVINTERVSLVATCNYLTEKKTQLDNERFQLLNRIRELQEKSAEFMNAEIALQEERAQMRIREQIAKATADLNLGDERASSAFGTSPETLDEFMMTDVLPSEVKFKLSTHDGEVHDVEWMSDDTFATAGSDSKVQIWRVSPNKTDASKVSTLSGCLGPVNRLDYDSQRHVCLASSNDKTCRLWNIDSQRLLSTFSGHTDKVSSARLFQSHNVISGSADRTIKNWDISSIRCLKSYLVGSTVFDIVAKCGVSQSSFISSHFDKKVRFWDARSSDATYSVELGQKVSSLDISMDGLQVLASSRDDTLSLIDVRNYGIIHLYSAEQYKTSCDSTRAIFSSTGEYVLAGSSNSSVFIWNTKTTKLEKVVKTARSDSAQIMSLAWNPSGRGLLACDRQKTCTLWR.

7 WD repeats span residues 243-281 (THDG…TDAS), 288-329 (GCLG…STFS), 330-368 (GHTD…CLKS), 371-411 (VGST…ATYS), 413-452 (ELGQ…IIHL), 459-498 (KTSC…LEKV), and 504-534 (SDSA…TLWR).

Belongs to the WD repeat tipD family. In terms of assembly, homodimer (via N-terminus). Most likely a component of a complex at least containing atg-5, lgg-3, atg-16.1 and/or atg-16.2. Interacts (via N-terminus) with atg-16.1 (via N-terminus). Interacts (via N-terminus) with atg-5. Interacts (via WD 5-6 repeats) with lgg-2; the interaction is direct. As to expression, expressed in neurons, pharyngeal muscles, body wall muscle cells and intestinal cells.

Its subcellular location is the cytoplasm. It is found in the cell membrane. In terms of biological role, most likely a component of the atg-5-atg-12-atg-16.1/atg-16.2 complex, which is recruited to the preautophagosomal membrane and associates with lgg-2 to promote autophagosome formation. Plays a role in the recruitment of lipidated lgg-1 probably to the autophagosome membrane to promote autophagosome formation. Furthermore, association with atg-5 is required for the nucleation of lgg-1 positive autophagosomes. Although its role in autophagosome formation may be distinct to the role of atg-16.2, it functions in a partially redundant manner with atg-16.1 to regulate autophagic processes. In a daf-18/PTEN- and daf-16/FOXO-dependent manner, required for maintaining the numbers of germ stem cell progenitors in the gonad during the late phases of larval development. This chain is Autophagic-related protein 16.2, found in Caenorhabditis elegans.